Consider the following 91-residue polypeptide: Small ribosomal subunit protein uS19 (91 aa).

The protein belongs to the universal ribosomal protein uS19 family.

Its function is as follows. Protein S19 forms a complex with S13 that binds strongly to the 16S ribosomal RNA. The chain is Small ribosomal subunit protein uS19 from Ralstonia nicotianae (strain ATCC BAA-1114 / GMI1000) (Ralstonia solanacearum).